The primary structure comprises 322 residues: Malate dehydrogenase (322 aa).

NAD(+) contacts are provided by residues 10–15 (GSGQIG) and Asp34. Substrate contacts are provided by Arg83 and Arg89. NAD(+)-binding positions include Asn96 and 119–121 (ITN). Substrate contacts are provided by Asn121 and Arg152. The active-site Proton acceptor is the His176.

Belongs to the LDH/MDH superfamily. MDH type 3 family.

The enzyme catalyses (S)-malate + NAD(+) = oxaloacetate + NADH + H(+). In terms of biological role, catalyzes the reversible oxidation of malate to oxaloacetate. This chain is Malate dehydrogenase, found in Nitrobacter winogradskyi (strain ATCC 25391 / DSM 10237 / CIP 104748 / NCIMB 11846 / Nb-255).